The chain runs to 331 residues: Ribose-phosphate pyrophosphokinase (331 aa).

55–57 (DGE) contacts ATP. Residues His-148 and Asp-187 each contribute to the Mg(2+) site. Residue Lys-211 is part of the active site. D-ribose 5-phosphate contacts are provided by residues Arg-213, Asp-237, and 241-245 (DTGGT).

This sequence belongs to the ribose-phosphate pyrophosphokinase family. Class I subfamily. In terms of assembly, homohexamer. The cofactor is Mg(2+).

It localises to the cytoplasm. The catalysed reaction is D-ribose 5-phosphate + ATP = 5-phospho-alpha-D-ribose 1-diphosphate + AMP + H(+). The protein operates within metabolic intermediate biosynthesis; 5-phospho-alpha-D-ribose 1-diphosphate biosynthesis; 5-phospho-alpha-D-ribose 1-diphosphate from D-ribose 5-phosphate (route I): step 1/1. In terms of biological role, involved in the biosynthesis of the central metabolite phospho-alpha-D-ribosyl-1-pyrophosphate (PRPP) via the transfer of pyrophosphoryl group from ATP to 1-hydroxyl of ribose-5-phosphate (Rib-5-P). This chain is Ribose-phosphate pyrophosphokinase, found in Parasynechococcus marenigrum (strain WH8102).